A 320-amino-acid polypeptide reads, in one-letter code: MDFLANLCCVNKLTLLEEFILSKEGTSFVLPFPEEWRVTFHSLETIPEISKEDIEEIRNTYLCCEKTLIVVGVLHHVKKSTCRGPILLQGDRGHLYVYNGFFDKSLYYVSSNLQDFFLVGLKFFYPIYELCDFIVDFETGSKIVEHSKSFSDMIIYRDENINVCFILKSSPYKTYTRFCRLPMTPYTDQDLHRWKRVIRCNIVDVLFCVKHNVFGKWFELVIIFDVNGKIFGVDDEQIIFLAHNITEFLKIGCLRFNENRRLHGYWFERTNDVRNVEEELSRQINCPWGNTCKRKKRNIFKQPLLWKSVGRKNNSAHNVL.

It belongs to the herpesviridae US22 family.

The protein is Protein U25 (U25) of Human herpesvirus 7 (strain JI) (HHV-7).